A 599-amino-acid chain; its full sequence is Aspartate--tRNA ligase (599 aa).

Glu-180 lines the L-aspartate pocket. Positions 204-207 are aspartate; sequence QIFK. Arg-226 is an L-aspartate binding site. Residues 226–228 and Gln-235 contribute to the ATP site; that span reads RDE. His-454 lines the L-aspartate pocket. Position 488 (Glu-488) interacts with ATP. Residue Arg-495 coordinates L-aspartate. 540-543 is an ATP binding site; sequence GLDR.

This sequence belongs to the class-II aminoacyl-tRNA synthetase family. Type 1 subfamily. In terms of assembly, homodimer.

It localises to the cytoplasm. The enzyme catalyses tRNA(Asp) + L-aspartate + ATP = L-aspartyl-tRNA(Asp) + AMP + diphosphate. Functionally, catalyzes the attachment of L-aspartate to tRNA(Asp) in a two-step reaction: L-aspartate is first activated by ATP to form Asp-AMP and then transferred to the acceptor end of tRNA(Asp). The protein is Aspartate--tRNA ligase of Clostridium botulinum (strain Eklund 17B / Type B).